Consider the following 573-residue polypeptide: 2-succinyl-5-enolpyruvyl-6-hydroxy-3-cyclohexene-1-carboxylate synthase (573 aa).

Belongs to the TPP enzyme family. MenD subfamily. In terms of assembly, homodimer. The cofactor is Mg(2+). Requires Mn(2+) as cofactor. It depends on thiamine diphosphate as a cofactor.

It catalyses the reaction isochorismate + 2-oxoglutarate + H(+) = 5-enolpyruvoyl-6-hydroxy-2-succinyl-cyclohex-3-ene-1-carboxylate + CO2. It participates in quinol/quinone metabolism; 1,4-dihydroxy-2-naphthoate biosynthesis; 1,4-dihydroxy-2-naphthoate from chorismate: step 2/7. It functions in the pathway quinol/quinone metabolism; menaquinone biosynthesis. Functionally, catalyzes the thiamine diphosphate-dependent decarboxylation of 2-oxoglutarate and the subsequent addition of the resulting succinic semialdehyde-thiamine pyrophosphate anion to isochorismate to yield 2-succinyl-5-enolpyruvyl-6-hydroxy-3-cyclohexene-1-carboxylate (SEPHCHC). In Shewanella sp. (strain W3-18-1), this protein is 2-succinyl-5-enolpyruvyl-6-hydroxy-3-cyclohexene-1-carboxylate synthase.